A 472-amino-acid chain; its full sequence is Tryptophanase (472 aa).

Residue Lys-270 is modified to N6-(pyridoxal phosphate)lysine.

The protein belongs to the beta-eliminating lyase family. Homotetramer. Requires pyridoxal 5'-phosphate as cofactor.

The catalysed reaction is L-tryptophan + H2O = indole + pyruvate + NH4(+). The protein operates within amino-acid degradation; L-tryptophan degradation via pyruvate pathway; indole and pyruvate from L-tryptophan: step 1/1. The polypeptide is Tryptophanase (tnaA) (Vibrio cholerae serotype O1 (strain ATCC 39315 / El Tor Inaba N16961)).